A 57-amino-acid polypeptide reads, in one-letter code: Protein translocase subunit SecE (57 aa).

Residues 34-54 (AGILLIGAIGFLVFLIMGGIV) traverse the membrane as a helical segment.

It belongs to the SecE/SEC61-gamma family. Component of the Sec protein translocase complex. Heterotrimer consisting of SecY (alpha), SecG (beta) and SecE (gamma) subunits. The heterotrimers can form oligomers, although 1 heterotrimer is thought to be able to translocate proteins. Interacts with the ribosome. May interact with SecDF, and other proteins may be involved.

The protein localises to the cell membrane. Essential subunit of the Sec protein translocation channel SecYEG. Clamps together the 2 halves of SecY. May contact the channel plug during translocation. The sequence is that of Protein translocase subunit SecE from Halobacterium salinarum (strain ATCC 29341 / DSM 671 / R1).